A 68-amino-acid polypeptide reads, in one-letter code: MARWNVCSYCGREFEPGTGKMFVRNDGRVLFFCSSKCEKLYFMGRNPRKLKWTKAFQEARLQRAKRRK.

Zn(2+) is bound by residues Cys7, Cys10, Cys33, and Cys37. A C4-type zinc finger spans residues 7-37; sequence CSYCGREFEPGTGKMFVRNDGRVLFFCSSKC.

This sequence belongs to the eukaryotic ribosomal protein eL24 family. In terms of assembly, part of the 50S ribosomal subunit. Forms a cluster with proteins L3 and L14. It depends on Zn(2+) as a cofactor.

Its function is as follows. Binds to the 23S rRNA. This chain is Large ribosomal subunit protein eL24, found in Thermococcus gammatolerans (strain DSM 15229 / JCM 11827 / EJ3).